The primary structure comprises 666 residues: 7SK snRNA methylphosphate capping enzyme (666 aa).

Position 1 is an N-acetylmethionine (Met-1). Basic and acidic residues predominate over residues 1–10 (MIEMAAEKEP). A disordered region spans residues 1–141 (MIEMAAEKEP…GSGGSFKHPA (141 aa)). The span at 50-61 (GPGPRAHSAGAA) shows a compositional bias: low complexity. Ser-57 bears the Phosphoserine mark. Arg-91 is subject to Omega-N-methylarginine. Phosphoserine occurs at positions 126, 150, and 154. Thr-188 carries the post-translational modification Phosphothreonine. 3 positions are modified to phosphoserine: Ser-191, Ser-192, and Ser-229. Basic residues predominate over residues 235 to 244 (RKRHRHRGPH). The disordered stretch occupies residues 235–291 (RKRHRHRGPHHQQQQQASGGNDSNAAVLPTDPLTPSLHGEGATQQQQNRGQNRDAPQ). A compositionally biased stretch (low complexity) spans 245-254 (HQQQQQASGG). Thr-268 carries the post-translational modification Phosphothreonine. A phosphoserine mark is found at Ser-307 and Ser-321. Positions 309 to 337 (LPSALQGSSGSLSAPPAASVTSAPSTSSS) are enriched in low complexity. The disordered stretch occupies residues 309–383 (LPSALQGSSG…HHHPLPATGF (75 aa)). A compositionally biased stretch (basic residues) spans 338-347 (SRHRKRRRTS). Position 368 is a phosphoserine (Ser-368). S-adenosyl-L-methionine-binding positions include Tyr-399, Arg-410, 428–430 (GCN), 451–452 (DI), 536–537 (NY), and Phe-558. The 256-residue stretch at 408 to 663 (DVRLRVLKPE…PVYLFHKARS (256 aa)) folds into the Bin3-type SAM domain. A Glycyl lysine isopeptide (Lys-Gly) (interchain with G-Cter in SUMO2) cross-link involves residue Lys-620.

Belongs to the methyltransferase superfamily. In terms of assembly, core component of the 7SK RNP complex, at least composed of 7SK RNA, LARP7, MEPCE, HEXIM1 (or HEXIM2) and P-TEFb (composed of CDK9 and CCNT1/cyclin-T1). Interacts with METTL16. Interacts with RBM7; upon genotoxic stress this interaction is enhanced, triggering the release of inactive P-TEFb complex from the core, yielding to P-TEFb complex activation. Post-translationally, dephosphorylated at Ser-126 by the PNUTS-PP1 complex, promoting RNA polymerase II transcription pause-release.

Its subcellular location is the nucleus. The enzyme catalyses a 5'-end triphospho-guanosine-ribonucleotide-snRNA + S-adenosyl-L-methionine = a 5'-end methyltriphosphate-guanosine-ribonucleotide-snRNA + S-adenosyl-L-homocysteine. S-adenosyl-L-methionine-dependent methyltransferase that adds a methylphosphate cap at the 5'-end of 7SK snRNA (7SK RNA), leading to stabilize it. Also has a non-enzymatic function as part of the 7SK RNP complex: the 7SK RNP complex sequesters the positive transcription elongation factor b (P-TEFb) in a large inactive 7SK RNP complex preventing RNA polymerase II phosphorylation and subsequent transcriptional elongation. The 7SK RNP complex also promotes snRNA gene transcription by RNA polymerase II via interaction with the little elongation complex (LEC). In the 7SK RNP complex, MEPCE is required to stabilize 7SK RNA and facilitate the assembly of 7SK RNP complex. MEPCE has a non-enzymatic function in the 7SK RNP complex; it has a non-enzymatic function; interaction with LARP7 within the 7SK RNP complex occluding its catalytic center. Also required for stability of U6 snRNAs. In Mus musculus (Mouse), this protein is 7SK snRNA methylphosphate capping enzyme.